Here is a 226-residue protein sequence, read N- to C-terminus: V-type proton ATPase subunit E 2 (226 aa).

This sequence belongs to the V-ATPase E subunit family. As to quaternary structure, V-ATPase is a heteromultimeric enzyme made up of two complexes: the ATP-hydrolytic V1 complex and the proton translocation V0 complex. The V1 complex consists of three catalytic AB heterodimers that form a heterohexamer, three peripheral stalks each consisting of EG heterodimers, one central rotor including subunits D and F, and the regulatory subunits C and H. The proton translocation complex V0 consists of the proton transport subunit a, a ring of proteolipid subunits c9c'', rotary subunit d, subunits e and f, and the accessory subunits ATP6AP1/Ac45 and ATP6AP2/PRR. As to expression, testis specific.

In terms of biological role, subunit of the V1 complex of vacuolar(H+)-ATPase (V-ATPase), a multisubunit enzyme composed of a peripheral complex (V1) that hydrolyzes ATP and a membrane integral complex (V0) that translocates protons. V-ATPase is responsible for acidifying and maintaining the pH of intracellular compartments and in some cell types, is targeted to the plasma membrane, where it is responsible for acidifying the extracellular environment. The polypeptide is V-type proton ATPase subunit E 2 (ATP6V1E2) (Homo sapiens (Human)).